The following is a 385-amino-acid chain: Outer membrane protein assembly factor BamB (385 aa).

A signal peptide spans 1–20 (MRKVLKKAALCTFGFSMLFG). A lipid anchor (N-palmitoyl cysteine) is attached at Cys-21. Cys-21 carries S-diacylglycerol cysteine lipidation.

It belongs to the BamB family. Part of the Bam complex.

The protein localises to the cell outer membrane. In terms of biological role, part of the outer membrane protein assembly complex, which is involved in assembly and insertion of beta-barrel proteins into the outer membrane. This Aliivibrio fischeri (strain ATCC 700601 / ES114) (Vibrio fischeri) protein is Outer membrane protein assembly factor BamB.